Here is a 509-residue protein sequence, read N- to C-terminus: Maturase K (509 aa).

It belongs to the intron maturase 2 family. MatK subfamily.

It localises to the plastid. The protein localises to the chloroplast. Usually encoded in the trnK tRNA gene intron. Probably assists in splicing its own and other chloroplast group II introns. The polypeptide is Maturase K (Solanum tuberosum (Potato)).